The sequence spans 545 residues: Cleavage and polyadenylation specificity factor subunit 6 (545 aa).

Residues 37–69 (ISPSANNGDAPEDRDYLDSLPAPGGNEGSKGAP) are disordered. The RRM domain occupies 81 to 161 (IALYIGNLTW…QNPIVTPCNK (81 aa)). Positions 165-180 (SQFEMQSRKSTQSGQM) are enriched in polar residues. 2 disordered regions span residues 165–404 (SQFE…PLSE) and 478–545 (YGSV…YRHR). The span at 184–200 (GKAGPPGSGSRGGGFPP) shows a compositional bias: gly residues. 4 stretches are compositionally biased toward pro residues: residues 220-230 (PVGPGGPPPHF), 237-265 (PRLP…PLGG), 287-363 (PMGP…PPGN), and 372-383 (GPPPGDPYGRPP). Basic and acidic residues-rich tracts occupy residues 384-397 (PYDR…DMDA) and 483-497 (GRRE…SRSR). The span at 498 to 508 (EKSRRHKSRSR) shows a compositional bias: basic residues. Positions 509–545 (DRHEDYYRERSRERDRHRERDRDRERDREREREYRHR) are enriched in basic and acidic residues.

It belongs to the RRM CPSF6/7 family. In terms of assembly, component of the cleavage factor Im (CFIm) complex.

It is found in the nucleus. The protein localises to the nucleoplasm. The protein resides in the nucleus speckle. It localises to the cytoplasm. Functionally, component of the cleavage factor Im (CFIm) complex that functions as an activator of the pre-mRNA 3'-end cleavage and polyadenylation processing required for the maturation of pre-mRNA into functional mRNAs. CFIm contributes to the recruitment of multiprotein complexes on specific sequences on the pre-mRNA 3'-end, so called cleavage and polyadenylation signals (pA signals). Most pre-mRNAs contain multiple pA signals, resulting in alternative cleavage and polyadenylation (APA) producing mRNAs with variable 3'-end formation. The CFIm complex acts as a key regulator of cleavage and polyadenylation site choice during APA through its binding to 5'-UGUA-3' elements localized in the 3'-untranslated region (UTR) for a huge number of pre-mRNAs. Plays a role in mRNA export. This Danio rerio (Zebrafish) protein is Cleavage and polyadenylation specificity factor subunit 6.